Reading from the N-terminus, the 163-residue chain is Nucleotide-binding protein ESA_02876 (163 aa).

This sequence belongs to the YajQ family.

In terms of biological role, nucleotide-binding protein. This is Nucleotide-binding protein ESA_02876 from Cronobacter sakazakii (strain ATCC BAA-894) (Enterobacter sakazakii).